The sequence spans 277 residues: Inositol monophosphatase 1 (277 aa).

Mg(2+) is bound by residues glutamate 70, aspartate 90, isoleucine 92, and aspartate 93. A substrate-binding site is contributed by glutamate 70. Substrate-binding positions include 92–95, 194–196, glutamate 213, and aspartate 220; these read IDGT and GTA. A Mg(2+)-binding site is contributed by aspartate 220.

This sequence belongs to the inositol monophosphatase superfamily. Homodimer. Mg(2+) is required as a cofactor. In terms of tissue distribution, ubiquitous.

Its subcellular location is the cytoplasm. The enzyme catalyses a myo-inositol phosphate + H2O = myo-inositol + phosphate. It catalyses the reaction 1D-myo-inositol 1-phosphate + H2O = myo-inositol + phosphate. It carries out the reaction 1D-myo-inositol 2-phosphate + H2O = myo-inositol + phosphate. The catalysed reaction is 1D-myo-inositol 3-phosphate + H2O = myo-inositol + phosphate. The enzyme catalyses 1D-myo-inositol 4-phosphate + H2O = myo-inositol + phosphate. It catalyses the reaction 1D-myo-inositol 5-phosphate + H2O = myo-inositol + phosphate. It carries out the reaction 1D-myo-inositol 6-phosphate + H2O = myo-inositol + phosphate. The catalysed reaction is scyllo-inositol 1-phosphate + H2O = scyllo-inositol + phosphate. The enzyme catalyses alpha-D-galactose 1-phosphate + H2O = D-galactose + phosphate. It catalyses the reaction alpha-D-glucose 1-phosphate + H2O = D-glucose + phosphate. It carries out the reaction D-glucose 6-phosphate + H2O = D-glucose + phosphate. The catalysed reaction is beta-D-fructose 1-phosphate + H2O = D-fructose + phosphate. The enzyme catalyses glycerol 2-phosphate + H2O = glycerol + phosphate. It catalyses the reaction adenosine 2'-phosphate + H2O = adenosine + phosphate. The protein operates within polyol metabolism; myo-inositol biosynthesis; myo-inositol from D-glucose 6-phosphate: step 2/2. Its activity is regulated as follows. Activity with myo-inositol monophosphate and D-galactose 1-phosphate is inhibited by Li(+), Ca(2+) and Mn(2+), but also by Mg(2+) at concentrations above 3 mM. Its function is as follows. Phosphatase involved in the dephosphorylation of myo-inositol monophosphate to generate myo-inositol. Is also able to dephosphorylate scyllo-inositol-phosphate, myo-inositol 1,4-diphosphate, scyllo-inositol-1,3-diphosphate and scyllo-inositol-1,4-diphosphate. Also dephosphorylates in vitro other sugar-phosphates including D-galactose-1-phosphate, glucose-1-phosphate, glucose-6-phosphate, fructose-1-phosphate, beta-glycerophosphate and 2'-AMP. Responsible for the provision of inositol required for synthesis of phosphatidylinositol and polyphosphoinositides, and involved in maintaining normal brain function. Has been implicated as the pharmacological target for lithium Li(+) action in brain. Is equally active with myo-inositol monophosphate and D-galactose 1-phosphate. The polypeptide is Inositol monophosphatase 1 (Impa1) (Rattus norvegicus (Rat)).